Reading from the N-terminus, the 524-residue chain is Nickel-binding periplasmic protein (524 aa).

Positions 1 to 22 (MLSTLRRTLFALLACASFIVHA) are cleaved as a signal peptide.

Belongs to the bacterial solute-binding protein 5 family.

It localises to the periplasm. Functionally, involved in a nickel transport system, probably represents the nickel binder. This is Nickel-binding periplasmic protein (nikA) from Escherichia coli (strain K12).